Consider the following 409-residue polypeptide: Tryptophan synthase beta chain (409 aa).

An N6-(pyridoxal phosphate)lysine modification is found at lysine 100.

Belongs to the TrpB family. In terms of assembly, tetramer of two alpha and two beta chains. It depends on pyridoxal 5'-phosphate as a cofactor.

The enzyme catalyses (1S,2R)-1-C-(indol-3-yl)glycerol 3-phosphate + L-serine = D-glyceraldehyde 3-phosphate + L-tryptophan + H2O. It participates in amino-acid biosynthesis; L-tryptophan biosynthesis; L-tryptophan from chorismate: step 5/5. Functionally, the beta subunit is responsible for the synthesis of L-tryptophan from indole and L-serine. The protein is Tryptophan synthase beta chain of Pyrobaculum arsenaticum (strain DSM 13514 / JCM 11321 / PZ6).